We begin with the raw amino-acid sequence, 118 residues long: Large ribosomal subunit protein bL21c (118 aa).

It belongs to the bacterial ribosomal protein bL21 family. As to quaternary structure, part of the 50S ribosomal subunit.

The protein localises to the plastid. Its subcellular location is the chloroplast. This protein binds to 23S rRNA. The chain is Large ribosomal subunit protein bL21c from Zygnema circumcarinatum (Green alga).